A 360-amino-acid chain; its full sequence is Photosystem II protein D1 3 (360 aa).

A run of 3 helical transmembrane segments spans residues 29–46 (YVGW…TATI), 118–133 (HFLL…EWEL), and 142–156 (WIAV…AATA). Chlorophyll a is bound at residue histidine 118. Pheophytin a is bound at residue tyrosine 126. [CaMn4O5] cluster-binding residues include aspartate 170 and glutamate 189. Residues 197-218 (FHMLGVAGVFGGALFSAMHGSL) form a helical membrane-spanning segment. Histidine 198 contributes to the chlorophyll a binding site. A quinone-binding positions include histidine 215 and 264–265 (SF). A Fe cation-binding site is contributed by histidine 215. Histidine 272 is a Fe cation binding site. The chain crosses the membrane as a helical span at residues 274–288 (FLAAWPVIGIWFASL). [CaMn4O5] cluster contacts are provided by histidine 332, glutamate 333, aspartate 342, and alanine 344. A propeptide spanning residues 345–360 (AGDQAPVALQAPAING) is cleaved from the precursor.

Belongs to the reaction center PufL/M/PsbA/D family. PSII is composed of 1 copy each of membrane proteins PsbA, PsbB, PsbC, PsbD, PsbE, PsbF, PsbH, PsbI, PsbJ, PsbK, PsbL, PsbM, PsbT, PsbX, PsbY, PsbZ, Psb30/Ycf12, peripheral proteins PsbO, CyanoQ (PsbQ), PsbU, PsbV and a large number of cofactors. It forms dimeric complexes. The cofactor is The D1/D2 heterodimer binds P680, chlorophylls that are the primary electron donor of PSII, and subsequent electron acceptors. It shares a non-heme iron and each subunit binds pheophytin, quinone, additional chlorophylls, carotenoids and lipids. D1 provides most of the ligands for the Mn4-Ca-O5 cluster of the oxygen-evolving complex (OEC). There is also a Cl(-1) ion associated with D1 and D2, which is required for oxygen evolution. The PSII complex binds additional chlorophylls, carotenoids and specific lipids.. In terms of processing, tyr-161 forms a radical intermediate that is referred to as redox-active TyrZ, YZ or Y-Z. Post-translationally, C-terminally processed by CtpA; processing is essential to allow assembly of the oxygen-evolving complex and thus photosynthetic growth.

Its subcellular location is the cellular thylakoid membrane. The catalysed reaction is 2 a plastoquinone + 4 hnu + 2 H2O = 2 a plastoquinol + O2. Its function is as follows. Photosystem II (PSII) is a light-driven water:plastoquinone oxidoreductase that uses light energy to abstract electrons from H(2)O, generating O(2) and a proton gradient subsequently used for ATP formation. It consists of a core antenna complex that captures photons, and an electron transfer chain that converts photonic excitation into a charge separation. The D1/D2 (PsbA/PsbD) reaction center heterodimer binds P680, the primary electron donor of PSII as well as several subsequent electron acceptors. This Picosynechococcus sp. (strain ATCC 27264 / PCC 7002 / PR-6) (Agmenellum quadruplicatum) protein is Photosystem II protein D1 3.